Here is a 397-residue protein sequence, read N- to C-terminus: Purine ribonucleoside efflux pump NepI (397 aa).

Residues 1-21 (MNENIAEKFRADGVARPNWSA) lie on the Cytoplasmic side of the membrane. Residues 22-42 (VFAVAFCVACLITVEFLPVSL) traverse the membrane as a helical segment. Topologically, residues 43-54 (LTPMAQDLGISE) are periplasmic. A helical transmembrane segment spans residues 55–75 (GVAGQSVTVTAFVAMFSSLFI). The Cytoplasmic segment spans residues 76 to 85 (TQIIQATDRR). Residues 86 to 106 (YIVILFAVLLTASCLMVSFAN) form a helical membrane-spanning segment. Ser-107 is a topological domain (periplasmic). A helical membrane pass occupies residues 108-128 (FTLLLLGRACLGLALGGFWAM). At 129 to 147 (SASLTMRLVPARTVPKALS) the chain is on the cytoplasmic side. The chain crosses the membrane as a helical span at residues 148-168 (VIFGAVSIALVIAAPLGSFLG). The Periplasmic segment spans residues 169–175 (GIIGWRN). The chain crosses the membrane as a helical span at residues 176 to 196 (VFNAAAVMGVLCVIWVVKSLP). The Cytoplasmic portion of the chain corresponds to 197–215 (SLPGEPSHQKQNMFSLLQR). Residues 216 to 236 (PGVMAGMIAIFMSFAGQFAFF) form a helical membrane-spanning segment. Residues 237–255 (TYIRPVYMNLAGFDVDGLT) lie on the Periplasmic side of the membrane. The helical transmembrane segment at 256–276 (LVLLSFGIASFVGTSFSSYVL) threads the bilayer. The Cytoplasmic segment spans residues 277–281 (KRSVK). Residues 282-302 (LALAGAPLLLALSALTLIVWG) form a helical membrane-spanning segment. Residues 303-305 (SDK) lie on the Periplasmic side of the membrane. The helical transmembrane segment at 306–326 (TVAAVIAIIWGLAFALVPVGW) threads the bilayer. Topologically, residues 327-343 (STWITRSLADQAEKAGS) are cytoplasmic. The chain crosses the membrane as a helical span at residues 344–364 (IQVAVIQLANTCGAAVGGYAL). Over 365–366 (DN) the chain is Periplasmic. Residues 367-387 (FGLLSPLALSGGLMLLTALVV) traverse the membrane as a helical segment. At 388 to 397 (AAKVRITPMS) the chain is on the cytoplasmic side.

Belongs to the major facilitator superfamily. DHA1 family. NepI (TC 2.A.1.2.26) subfamily.

The protein resides in the cell inner membrane. It catalyses the reaction inosine(in) + H(+)(out) = inosine(out) + H(+)(in). The catalysed reaction is guanosine(in) + H(+)(out) = guanosine(out) + H(+)(in). Functionally, involved in the efflux of purine ribonucleosides, such as inosine and guanosine. The protein is Purine ribonucleoside efflux pump NepI of Salmonella paratyphi B (strain ATCC BAA-1250 / SPB7).